The sequence spans 416 residues: Serine hydroxymethyltransferase (416 aa).

(6S)-5,6,7,8-tetrahydrofolate is bound by residues Leu-118 and 122 to 124 (GHL). Position 226 is an N6-(pyridoxal phosphate)lysine (Lys-226). (6S)-5,6,7,8-tetrahydrofolate contacts are provided by residues Glu-242 and 350–352 (SPF).

The protein belongs to the SHMT family. As to quaternary structure, homodimer. Pyridoxal 5'-phosphate is required as a cofactor.

The protein localises to the cytoplasm. The catalysed reaction is (6R)-5,10-methylene-5,6,7,8-tetrahydrofolate + glycine + H2O = (6S)-5,6,7,8-tetrahydrofolate + L-serine. It functions in the pathway one-carbon metabolism; tetrahydrofolate interconversion. The protein operates within amino-acid biosynthesis; glycine biosynthesis; glycine from L-serine: step 1/1. Its function is as follows. Catalyzes the reversible interconversion of serine and glycine with tetrahydrofolate (THF) serving as the one-carbon carrier. This reaction serves as the major source of one-carbon groups required for the biosynthesis of purines, thymidylate, methionine, and other important biomolecules. Also exhibits THF-independent aldolase activity toward beta-hydroxyamino acids, producing glycine and aldehydes, via a retro-aldol mechanism. This Helicobacter acinonychis (strain Sheeba) protein is Serine hydroxymethyltransferase.